The primary structure comprises 310 residues: Dihydroorotate dehydrogenase B (NAD(+)), catalytic subunit (310 aa).

Residues Ser19 and 43 to 44 (KA) each bind FMN. Substrate is bound by residues Lys43 and 67-71 (NAIGL). FMN is bound by residues Asn97 and Asn125. Asn125 is a substrate binding site. Cys128 functions as the Nucleophile in the catalytic mechanism. Residues Lys163 and Ile189 each coordinate FMN. 190–191 (NT) provides a ligand contact to substrate. Residues Gly215, 241–242 (GG), and 263–264 (GT) each bind FMN.

This sequence belongs to the dihydroorotate dehydrogenase family. Type 1 subfamily. Heterotetramer of 2 PyrK and 2 PyrD type B subunits. Requires FMN as cofactor.

It is found in the cytoplasm. It carries out the reaction (S)-dihydroorotate + NAD(+) = orotate + NADH + H(+). It participates in pyrimidine metabolism; UMP biosynthesis via de novo pathway; orotate from (S)-dihydroorotate (NAD(+) route): step 1/1. In terms of biological role, catalyzes the conversion of dihydroorotate to orotate with NAD(+) as electron acceptor. The sequence is that of Dihydroorotate dehydrogenase B (NAD(+)), catalytic subunit (pyrD) from Bacillus pumilus (strain SAFR-032).